A 319-amino-acid chain; its full sequence is Beta-ketoacyl-[acyl-carrier-protein] synthase III (319 aa).

Catalysis depends on residues Cys-112 and His-246. The interval 247–251 (QANFR) is ACP-binding. Asn-276 is a catalytic residue.

Belongs to the thiolase-like superfamily. FabH family. As to quaternary structure, homodimer.

The protein resides in the cytoplasm. It carries out the reaction malonyl-[ACP] + acetyl-CoA + H(+) = 3-oxobutanoyl-[ACP] + CO2 + CoA. It participates in lipid metabolism; fatty acid biosynthesis. Catalyzes the condensation reaction of fatty acid synthesis by the addition to an acyl acceptor of two carbons from malonyl-ACP. Catalyzes the first condensation reaction which initiates fatty acid synthesis and may therefore play a role in governing the total rate of fatty acid production. Possesses both acetoacetyl-ACP synthase and acetyl transacylase activities. Its substrate specificity determines the biosynthesis of branched-chain and/or straight-chain of fatty acids. The polypeptide is Beta-ketoacyl-[acyl-carrier-protein] synthase III (Shewanella oneidensis (strain ATCC 700550 / JCM 31522 / CIP 106686 / LMG 19005 / NCIMB 14063 / MR-1)).